Here is a 431-residue protein sequence, read N- to C-terminus: Isochorismate synthase MenF (431 aa).

The active-site Proton acceptor is the Lys190. The active-site Proton donor is the Glu240. Glu284 and Glu416 together coordinate Mg(2+).

The protein belongs to the isochorismate synthase family. In terms of assembly, homodimer. Mg(2+) serves as cofactor.

It catalyses the reaction chorismate = isochorismate. Its pathway is quinol/quinone metabolism; 1,4-dihydroxy-2-naphthoate biosynthesis; 1,4-dihydroxy-2-naphthoate from chorismate: step 1/7. It functions in the pathway quinol/quinone metabolism; menaquinone biosynthesis. Functionally, catalyzes the conversion of chorismate to isochorismate. Can also catalyze the reverse reaction, but with a lower efficiency. In Escherichia coli (strain K12), this protein is Isochorismate synthase MenF.